An 84-amino-acid chain; its full sequence is Cytochrome c oxidase subunit 12, mitochondrial (84 aa).

The CHCH domain maps to 27–70 (TKHCWQNYVDYHKCILAKGEDFAPCRQFWLAYRSLCPSGWYQRW). Positions 30–40 (CWQNYVDYHKC) match the Cx9C motif motif. Disulfide bonds link Cys30/Cys62 and Cys40/Cys51. The Cx10C motif motif lies at 51 to 62 (CRQFWLAYRSLC).

The protein belongs to the cytochrome c oxidase subunit 6B family. Component of the cytochrome c oxidase (complex IV, CIV), a multisubunit enzyme composed of 11 subunits. The complex is composed of a catalytic core of 3 subunits Cox1, Cox2 and Cox3, encoded in the mitochondrial DNA, and 8 supernumerary subunits Cox4, Cox5a/Cox5, Cox6, Cox7, Cox8, Cox7a/Cox9, Cox6b/Cox12 and Cox6a/Cox13, which are encoded in the nuclear genome. The complex exists as a monomer or a dimer and forms respiratory supercomplexes (SCs) in the inner mitochondrial membrane with NADH-ubiquinone oxidoreductase (complex I, CI) and ubiquinol-cytochrome c oxidoreductase (cytochrome b-c1 complex, complex III, CIII), resulting in various different assemblies (supercomplexes I(1)IV(1), I(1)III(3)IV(2), III(2)IV(1) and III(2)IV(2) as well as larger supercomplexes of compositions like I(1)III(2)IV(5-6)).

It localises to the mitochondrion inner membrane. Its pathway is energy metabolism; oxidative phosphorylation. In terms of biological role, component of the cytochrome c oxidase, the last enzyme in the mitochondrial electron transport chain which drives oxidative phosphorylation. The respiratory chain contains 3 multisubunit complexes succinate dehydrogenase (complex II, CII), ubiquinol-cytochrome c oxidoreductase (cytochrome b-c1 complex, complex III, CIII) and cytochrome c oxidase (complex IV, CIV), that cooperate to transfer electrons derived from NADH and succinate to molecular oxygen, creating an electrochemical gradient over the inner membrane that drives transmembrane transport and the ATP synthase. Cytochrome c oxidase is the component of the respiratory chain that catalyzes the reduction of oxygen to water. Electrons originating from reduced cytochrome c in the intermembrane space (IMS) are transferred via the dinuclear copper A center (CU(A)) of Cox2 and heme A of Cox1 to the active site in Cox1, a binuclear center (BNC) formed by heme A3 and copper B (CU(B)). The BNC reduces molecular oxygen to 2 water molecules using 4 electrons from cytochrome c in the IMS and 4 protons from the mitochondrial matrix. The polypeptide is Cytochrome c oxidase subunit 12, mitochondrial (cox-13) (Neurospora crassa (strain ATCC 24698 / 74-OR23-1A / CBS 708.71 / DSM 1257 / FGSC 987)).